A 77-amino-acid chain; its full sequence is Metallothionein-like protein 2B (77 aa).

Belongs to the metallothionein superfamily. Type 15 family. Expressed in vascular tissues of all organs. Expressed in root and leaf phloem, pollen and root hairs.

Metallothioneins have a high content of cysteine residues that bind various heavy metals. Functions as a metal chelator of copper (Cu) and zinc (Zn). Functions cooperatively with the phytochelatin synthase PCS1 to protect plants from Cu and cadmium toxicity. Plays a role in Cu homeostasis, specifically in the remobilization of Cu from senescing leaves. The mobilization of Cu from internal sources is important for seed development. This is Metallothionein-like protein 2B (MT2B) from Arabidopsis thaliana (Mouse-ear cress).